Here is a 455-residue protein sequence, read N- to C-terminus: Bifunctional protein GlmU (455 aa).

Positions 1–232 are pyrophosphorylase; it reads MASTTGALIL…DPNLLGVNNP (232 aa). UDP-N-acetyl-alpha-D-glucosamine contacts are provided by residues 10 to 13, Lys-24, Gln-75, and 80 to 81; these read LAAG and GT. Asp-106 is a binding site for Mg(2+). UDP-N-acetyl-alpha-D-glucosamine-binding residues include Gly-141, Glu-155, Asn-172, and Asn-230. Asn-230 contributes to the Mg(2+) binding site. Residues 233–253 form a linker region; it reads AELIRSEALLRTRLVIGHIEG. The segment at 254 to 455 is N-acetyltransferase; the sequence is GVLIHAPETV…QTNLPRKPKA (202 aa). Residues Arg-336 and Lys-354 each coordinate UDP-N-acetyl-alpha-D-glucosamine. Catalysis depends on His-366, which acts as the Proton acceptor. 2 residues coordinate UDP-N-acetyl-alpha-D-glucosamine: Tyr-369 and Asn-380. Residues Ala-383, 389-390, Ser-408, Ala-426, and Arg-443 contribute to the acetyl-CoA site; that span reads NY.

This sequence in the N-terminal section; belongs to the N-acetylglucosamine-1-phosphate uridyltransferase family. It in the C-terminal section; belongs to the transferase hexapeptide repeat family. As to quaternary structure, homotrimer. The cofactor is Mg(2+).

It localises to the cytoplasm. It carries out the reaction alpha-D-glucosamine 1-phosphate + acetyl-CoA = N-acetyl-alpha-D-glucosamine 1-phosphate + CoA + H(+). It catalyses the reaction N-acetyl-alpha-D-glucosamine 1-phosphate + UTP + H(+) = UDP-N-acetyl-alpha-D-glucosamine + diphosphate. It participates in nucleotide-sugar biosynthesis; UDP-N-acetyl-alpha-D-glucosamine biosynthesis; N-acetyl-alpha-D-glucosamine 1-phosphate from alpha-D-glucosamine 6-phosphate (route II): step 2/2. The protein operates within nucleotide-sugar biosynthesis; UDP-N-acetyl-alpha-D-glucosamine biosynthesis; UDP-N-acetyl-alpha-D-glucosamine from N-acetyl-alpha-D-glucosamine 1-phosphate: step 1/1. Its pathway is bacterial outer membrane biogenesis; LPS lipid A biosynthesis. Its function is as follows. Catalyzes the last two sequential reactions in the de novo biosynthetic pathway for UDP-N-acetylglucosamine (UDP-GlcNAc). The C-terminal domain catalyzes the transfer of acetyl group from acetyl coenzyme A to glucosamine-1-phosphate (GlcN-1-P) to produce N-acetylglucosamine-1-phosphate (GlcNAc-1-P), which is converted into UDP-GlcNAc by the transfer of uridine 5-monophosphate (from uridine 5-triphosphate), a reaction catalyzed by the N-terminal domain. In Nitratidesulfovibrio vulgaris (strain ATCC 29579 / DSM 644 / CCUG 34227 / NCIMB 8303 / VKM B-1760 / Hildenborough) (Desulfovibrio vulgaris), this protein is Bifunctional protein GlmU.